The chain runs to 348 residues: Uroporphyrinogen decarboxylase (348 aa).

Residues 27-31, Phe46, Asp76, Tyr152, Ser207, and His320 each bind substrate; that span reads RQAGR.

It belongs to the uroporphyrinogen decarboxylase family. In terms of assembly, homodimer.

Its subcellular location is the cytoplasm. The enzyme catalyses uroporphyrinogen III + 4 H(+) = coproporphyrinogen III + 4 CO2. It participates in porphyrin-containing compound metabolism; protoporphyrin-IX biosynthesis; coproporphyrinogen-III from 5-aminolevulinate: step 4/4. In terms of biological role, catalyzes the decarboxylation of four acetate groups of uroporphyrinogen-III to yield coproporphyrinogen-III. In Bacillus mycoides (strain KBAB4) (Bacillus weihenstephanensis), this protein is Uroporphyrinogen decarboxylase.